Consider the following 202-residue polypeptide: Hydrogenase expression/formation protein HoxM (202 aa).

Residues Glu15, Asp61, and His92 each contribute to the Ni(2+) site.

The protein belongs to the peptidase A31 family.

Absolutely required for hydrogenase activity. Mediates the attachment of hydrogenase to the bacterial membrane; attachment is a requirement for enzymatic activity. The sequence is that of Hydrogenase expression/formation protein HoxM (hoxM) from Cupriavidus necator (strain ATCC 17699 / DSM 428 / KCTC 22496 / NCIMB 10442 / H16 / Stanier 337) (Ralstonia eutropha).